Consider the following 216-residue polypeptide: Putative transmembrane protein RNF32-DT (216 aa).

The helical transmembrane segment at 177–197 (WIPLLLVAGCVSCFVGLAVCV) threads the bilayer.

In terms of tissue distribution, expressed only in testis.

Its subcellular location is the cytoplasm. It is found in the membrane. This is Putative transmembrane protein RNF32-DT from Homo sapiens (Human).